A 299-amino-acid polypeptide reads, in one-letter code: Pyridoxal kinase PdxY (299 aa).

S18 serves as a coordination point for substrate. ATP is bound by residues D120 and E157. Substrate is bound at residue D235.

It belongs to the pyridoxine kinase family. PdxY subfamily. Homodimer. Mg(2+) is required as a cofactor.

It carries out the reaction pyridoxal + ATP = pyridoxal 5'-phosphate + ADP + H(+). It functions in the pathway cofactor metabolism; pyridoxal 5'-phosphate salvage; pyridoxal 5'-phosphate from pyridoxal: step 1/1. In terms of biological role, pyridoxal kinase involved in the salvage pathway of pyridoxal 5'-phosphate (PLP). Catalyzes the phosphorylation of pyridoxal to PLP. The chain is Pyridoxal kinase PdxY from Deinococcus geothermalis (strain DSM 11300 / CIP 105573 / AG-3a).